Here is a 263-residue protein sequence, read N- to C-terminus: Regulatory protein RecX (263 aa).

Belongs to the RecX family.

Its subcellular location is the cytoplasm. Modulates RecA activity. This Bacillus licheniformis (strain ATCC 14580 / DSM 13 / JCM 2505 / CCUG 7422 / NBRC 12200 / NCIMB 9375 / NCTC 10341 / NRRL NRS-1264 / Gibson 46) protein is Regulatory protein RecX.